The sequence spans 122 residues: Large ribosomal subunit protein uL14 (122 aa).

It belongs to the universal ribosomal protein uL14 family. As to quaternary structure, part of the 50S ribosomal subunit. Forms a cluster with proteins L3 and L19. In the 70S ribosome, L14 and L19 interact and together make contacts with the 16S rRNA in bridges B5 and B8.

Its function is as follows. Binds to 23S rRNA. Forms part of two intersubunit bridges in the 70S ribosome. The chain is Large ribosomal subunit protein uL14 from Chlamydia trachomatis serovar A (strain ATCC VR-571B / DSM 19440 / HAR-13).